A 380-amino-acid chain; its full sequence is Protein arginine N-methyltransferase PRMT10 (380 aa).

An SAM-dependent MTase PRMT-type domain is found at 26 to 357 (EVDFANYFCT…KENHRLMDME (332 aa)). S-adenosyl-L-methionine contacts are provided by Gln-42, Arg-51, Gly-75, Glu-97, and Glu-126. Active-site residues include Glu-140 and Glu-149. The interval 187–227 (ENKMEDLEIAMHDWNLFVEDTESYYGVNMNVLTKAYRAEHE) is dimerization arm.

It belongs to the class I-like SAM-binding methyltransferase superfamily. Protein arginine N-methyltransferase family. As to quaternary structure, ring-like homodimer.

The enzyme catalyses L-arginyl-[protein] + 2 S-adenosyl-L-methionine = N(omega),N(omega)-dimethyl-L-arginyl-[protein] + 2 S-adenosyl-L-homocysteine + 2 H(+). Functionally, methylates (mono and asymmetric dimethylation) the guanidino nitrogens of arginyl residues in some proteins. This is Protein arginine N-methyltransferase PRMT10 (PRMT10) from Oryza sativa subsp. japonica (Rice).